A 141-amino-acid chain; its full sequence is Mitochondrial import inner membrane translocase subunit Tim16 (141 aa).

2 disordered regions span residues 34–53 and 108–141; these read AARRAGGGKQGDKSAESNLR and LDHEIKAHEQPRSSNTEAAQDTAEESQSRSRQRR. The tract at residues 60 to 113 is J-like; it reads EAKQILNIDDPKNVDAITKNYEHLFQVNERSKGGSFYIQSKVFRAKERLDHEIK. Basic and acidic residues predominate over residues 108–118; that stretch reads LDHEIKAHEQP.

It belongs to the TIM16/PAM16 family. Probable component of the PAM complex at least composed of a mitochondrial HSP70 protein, Roe1, TIM44, blp/TIM16 and TIM14. Associates with the TIM23 complex. As to expression, expressed in distinct cells in the embryonic and larval nervous system.

It localises to the mitochondrion inner membrane. In terms of biological role, regulates ATP-dependent protein translocation into the mitochondrial matrix. Essential for larval development. This Drosophila melanogaster (Fruit fly) protein is Mitochondrial import inner membrane translocase subunit Tim16 (blp).